Reading from the N-terminus, the 397-residue chain is Probable sugar efflux transporter (397 aa).

The next 12 membrane-spanning stretches (helical) occupy residues 15 to 35 (VVTLAIAAFIFNTTEFVPVGL), 50 to 70 (VGIMLTIYAWVVALMSLPFML), 81 to 101 (LICLFVLFIASHVLSFLAWNF), 103 to 123 (VLVISRIGIAFAHAVFWSITA), 136 to 156 (AQALSLIATGTALAMVLGLPI), 169 to 189 (TFFAIGIGALITLVCLIKLLP), 209 to 229 (PALMSIYLLTVVVVTAHYTAY), 246 to 266 (FATVLLLILGGAGIIGSVVFG), 275 to 295 (PLISIAIMLLVICLMLLLPAA), 301 to 321 (LAVLSIFWGIAIMVIGLGMQV), 333 to 353 (VAMALFSGIFNIGIGAGALVG), and 364 to 384 (TIGYVGAVPALAALVWSIIIF).

The protein belongs to the major facilitator superfamily. SotB (TC 2.A.1.2) family.

It localises to the cell inner membrane. Involved in the efflux of sugars. The physiological role may be the reduction of the intracellular concentration of toxic sugars or sugar metabolites. This chain is Probable sugar efflux transporter, found in Citrobacter koseri (strain ATCC BAA-895 / CDC 4225-83 / SGSC4696).